The sequence spans 72 residues: Disintegrin cereberin (72 aa).

The Disintegrin domain maps to 1–72 (EAGEECDCGS…SADCPRNRFH (72 aa)). 6 disulfide bridges follow: C6/C21, C8/C16, C15/C38, C29/C35, C34/C59, and C47/C66. The Cell attachment site signature appears at 51 to 53 (RGD). Residues 51 to 72 (RGDNPDDRCTGQSADCPRNRFH) are disordered.

This sequence belongs to the venom metalloproteinase (M12B) family. P-II subfamily. P-IIa sub-subfamily. Monomer (disintegrin). As to expression, expressed by the venom gland.

The protein resides in the secreted. In terms of biological role, inhibits fibrinogen interaction with platelet. Acts by binding to alpha-IIb/beta-3 (ITGA2B/ITGB3) on the platelet surface and inhibits aggregation induced by ADP, thrombin, platelet-activating factor and collagen. This chain is Disintegrin cereberin, found in Crotalus cerberus (Arizona black rattlesnake).